The following is a 375-amino-acid chain: Chaperone protein DnaJ (375 aa).

The J domain maps to 5 to 70 (DYYEILGISK…EKRAAYDQYG (66 aa)). A CR-type zinc finger spans residues 130-208 (GIIKEICIPT…CHGNGRVERS (79 aa)). Zn(2+)-binding residues include Cys143, Cys146, Cys160, Cys163, Cys182, Cys185, Cys196, and Cys199. 4 CXXCXGXG motif repeats span residues 143 to 150 (CEKCRGTG), 160 to 167 (CMTCHGQG), 182 to 189 (CPTCHGHG), and 196 to 203 (CNKCHGNG).

The protein belongs to the DnaJ family. In terms of assembly, homodimer. Zn(2+) is required as a cofactor.

It is found in the cytoplasm. In terms of biological role, participates actively in the response to hyperosmotic and heat shock by preventing the aggregation of stress-denatured proteins and by disaggregating proteins, also in an autonomous, DnaK-independent fashion. Unfolded proteins bind initially to DnaJ; upon interaction with the DnaJ-bound protein, DnaK hydrolyzes its bound ATP, resulting in the formation of a stable complex. GrpE releases ADP from DnaK; ATP binding to DnaK triggers the release of the substrate protein, thus completing the reaction cycle. Several rounds of ATP-dependent interactions between DnaJ, DnaK and GrpE are required for fully efficient folding. Also involved, together with DnaK and GrpE, in the DNA replication of plasmids through activation of initiation proteins. The protein is Chaperone protein DnaJ of Blochmanniella pennsylvanica (strain BPEN).